The primary structure comprises 135 residues: Fatty acid-binding protein 5 (135 aa).

Position 2 is an N-acetylalanine (Ala-2). Lys-17 carries the post-translational modification N6-acetyllysine. Tyr-22 is subject to Phosphotyrosine; by Tyr-kinases. The Nuclear localization signal motif lies at Lys-24–Lys-34. N-eicosanoyl ethanolamine is bound by residues Cys-43 and Arg-109. A disulfide bridge connects residues Cys-120 and Cys-127. Arg-129–Tyr-131 serves as a coordination point for (9Z,12Z)-octadecadienoate. Tyr-131 is an N-eicosanoyl ethanolamine binding site. Tyr-131 provides a ligand contact to hexadecanoate. A Phosphotyrosine modification is found at Tyr-131.

This sequence belongs to the calycin superfamily. Fatty-acid binding protein (FABP) family. Monomer. In terms of tissue distribution, most abundant in lens and retina (found in the mueller cells), moderately abundant in heart and testis (found in the Sertoli cells), and present in very low amounts in lung.

It is found in the cytoplasm. It localises to the nucleus. Its subcellular location is the synapse. The protein resides in the postsynaptic density. The protein localises to the secreted. It catalyses the reaction hexadecanoate(out) = hexadecanoate(in). It carries out the reaction (9Z,12Z)-octadecadienoate(out) = (9Z,12Z)-octadecadienoate(in). The catalysed reaction is (9Z)-octadecenoate(out) = (9Z)-octadecenoate(in). Intracellular carrier for long-chain fatty acids and related active lipids, such as endocannabinoids, that regulate the metabolism and actions of the ligands they bind. In addition to the cytosolic transport, selectively delivers specific fatty acids from the cytosol to the nucleus, wherein they activate nuclear receptors. Delivers retinoic acid to the nuclear receptor peroxisome proliferator-activated receptor delta; which promotes proliferation and survival. May also serve as a synaptic carrier of endocannabinoid at central synapses and thus controls retrograde endocannabinoid signaling. Modulates inflammation by regulating PTGES induction via NF-kappa-B activation, and prostaglandin E2 (PGE2) biosynthesis during inflammation. This Bos taurus (Bovine) protein is Fatty acid-binding protein 5 (FABP5).